Consider the following 407-residue polypeptide: Aurora kinase A-A (407 aa).

The span at 1 to 10 shows a compositional bias: basic and acidic residues; it reads MERAVKENHK. The segment at 1-130 is disordered; it reads MERAVKENHK…KTSAVPKEEG (130 aa). 2 stretches are compositionally biased toward polar residues: residues 67 to 77 and 84 to 110; these read ILSSQKPTTQI and QGHQSSKPQGPNENRNPQQTSHSSTPN. One can recognise a Protein kinase domain in the interval 140-390; the sequence is FEIGRPLGKG…LKGVLEHPWI (251 aa). ATP-binding positions include K150, K169, and 217–220; that span reads LDYA. Residue D263 is the Proton acceptor of the active site. Residue D281 coordinates ATP. The activation segment stretch occupies residues 287–300; that stretch reads HAPSSRRTTLCGTL.

The protein belongs to the protein kinase superfamily. Ser/Thr protein kinase family. Aurora subfamily. Interacts with kif2c and kif11. Phosphorylated. Autophosphorylated on a serine residue. Highly expressed in ovary and testis.

The protein localises to the cytoplasm. It is found in the cytoskeleton. Its subcellular location is the spindle. It localises to the microtubule organizing center. The protein resides in the centrosome. The enzyme catalyses L-seryl-[protein] + ATP = O-phospho-L-seryl-[protein] + ADP + H(+). It carries out the reaction L-threonyl-[protein] + ATP = O-phospho-L-threonyl-[protein] + ADP + H(+). Functionally, mitotic serine/threonine kinases that contributes to the regulation of cell cycle progression. Associates with the centrosome and the spindle microtubules during mitosis and plays a critical role in various mitotic events including the establishment of mitotic spindle, centrosome duplication, centrosome separation as well as maturation, chromosomal alignment, spindle assembly checkpoint, and cytokinesis. Phosphorylates numerous target proteins. Important for microtubule formation and/or stabilization. In Xenopus laevis (African clawed frog), this protein is Aurora kinase A-A (aurka-a).